A 281-amino-acid polypeptide reads, in one-letter code: MILSLLSMNINYNSITSIKQTLKERKIAPRKLWGQNYLINESIRQKIIESLDIKENEKIWEIGPGLGAMTEILLKKTNLLTAFEIDLKYSEILNEKFGKLKNFKLIKGDFLKKYKNENQNIDKIFSNLPYNIASKVISKLIEENFLKEMVFTVQKELADRITAKINSKNYSSFTVLVQSHFKVIKILDIGENNFYPAPKVKSTTLKLIPKKNNIKNFKEFNKLVRTVFSNRRKKLKNTIINFITNKATLRENFLKEYLDKRPENISVEEFIQISNTLNAYH.

S-adenosyl-L-methionine contacts are provided by Asn-36, Leu-38, Gly-63, Glu-84, Asp-109, and Asn-127.

This sequence belongs to the class I-like SAM-binding methyltransferase superfamily. rRNA adenine N(6)-methyltransferase family. RsmA subfamily.

It is found in the cytoplasm. It carries out the reaction adenosine(1518)/adenosine(1519) in 16S rRNA + 4 S-adenosyl-L-methionine = N(6)-dimethyladenosine(1518)/N(6)-dimethyladenosine(1519) in 16S rRNA + 4 S-adenosyl-L-homocysteine + 4 H(+). In terms of biological role, specifically dimethylates two adjacent adenosines (A1518 and A1519) in the loop of a conserved hairpin near the 3'-end of 16S rRNA in the 30S particle. May play a critical role in biogenesis of 30S subunits. This Borreliella burgdorferi (strain ATCC 35210 / DSM 4680 / CIP 102532 / B31) (Borrelia burgdorferi) protein is Ribosomal RNA small subunit methyltransferase A.